The chain runs to 388 residues: MNIHEYQGKEILRKYNVPVPRGIPAFSVEEALKAAETLGGPVWVVKAQIHAGGRGKGGGVKVAKSMDEVKTYASNILGMTLVTHQTGPEGKKVNRLLIEEGADIKKELYVSLVVDRVSQKVALMASSEGGMDIEEVAAHTPEKIHTLIVDPQIGLQDAEADDIARKIGVPDASVPQARQALQGLYKAFWETDASLAEINPLILTGDGKVIALDAKFNFDSNALFRHPEIVAYRDLDEEDANEIEASKFDLAYISLDGNIGCLVNGAGLAMATMDTIKLFGGEPANFLDVGGGATTEKVTEAFKLMLKNPGLKAILVNIFGGIMRCDVIAEGVIAASKAVSLSVPLVVRMKGTNEDLGKKMLADSGLPIIAADTMEEAAQKVVAAAAGK.

Positions Lys9–Glu244 constitute an ATP-grasp domain. ATP contacts are provided by residues Lys46, Gly53–Gly55, Glu99, Ala102, and Glu107. Residues Asn199 and Asp213 each coordinate Mg(2+). Substrate contacts are provided by residues Asn264 and Gly321–Met323.

This sequence belongs to the succinate/malate CoA ligase beta subunit family. As to quaternary structure, heterotetramer of two alpha and two beta subunits. Requires Mg(2+) as cofactor.

The catalysed reaction is succinate + ATP + CoA = succinyl-CoA + ADP + phosphate. It carries out the reaction GTP + succinate + CoA = succinyl-CoA + GDP + phosphate. Its pathway is carbohydrate metabolism; tricarboxylic acid cycle; succinate from succinyl-CoA (ligase route): step 1/1. Functionally, succinyl-CoA synthetase functions in the citric acid cycle (TCA), coupling the hydrolysis of succinyl-CoA to the synthesis of either ATP or GTP and thus represents the only step of substrate-level phosphorylation in the TCA. The beta subunit provides nucleotide specificity of the enzyme and binds the substrate succinate, while the binding sites for coenzyme A and phosphate are found in the alpha subunit. The chain is Succinate--CoA ligase [ADP-forming] subunit beta from Ralstonia nicotianae (strain ATCC BAA-1114 / GMI1000) (Ralstonia solanacearum).